A 727-amino-acid polypeptide reads, in one-letter code: Iron-sulfur clusters transporter atm1, mitochondrial (727 aa).

Residues asparagine 46–threonine 97 form a disordered region. Residues alanine 60–valine 77 are compositionally biased toward polar residues. Residues lysine 81–leucine 94 show a composition bias toward basic and acidic residues. Residues valine 131 to phenylalanine 152 form a helical membrane-spanning segment. The ABC transmembrane type-1 domain occupies valine 131–glutamine 421. Topologically, residues lysine 153–glycine 175 are mitochondrial intermembrane. A helical transmembrane segment spans residues serine 176 to phenylalanine 199. At alanine 200 to leucine 248 the chain is on the mitochondrial matrix side. The chain crosses the membrane as a helical span at residues leucine 249 to tyrosine 272. Glutamine 273 is a topological domain (mitochondrial intermembrane). Residues tyrosine 274–isoleucine 294 traverse the membrane as a helical segment. The Mitochondrial matrix segment spans residues threonine 295–alanine 360. Glutathione-binding positions include arginine 300–arginine 304 and asparagine 363–glutamine 366. The helical transmembrane segment at phenylalanine 361–tyrosine 379 threads the bilayer. Residues leucine 380–aspartate 394 lie on the Mitochondrial intermembrane side of the membrane. The helical transmembrane segment at leucine 395–tyrosine 416 threads the bilayer. Glutathione is bound at residue glycine 413. At arginine 417 to glutamine 727 the chain is on the mitochondrial matrix side. The ABC transporter domain occupies isoleucine 456–alanine 692. Residues tyrosine 465 and glycine 489–arginine 500 contribute to the ATP site. Residues glutamate 702–methionine 719 are compositionally biased toward basic and acidic residues. Positions glutamate 702–glutamine 727 are disordered.

This sequence belongs to the ABC transporter superfamily. ABCB family. Heavy Metal importer (TC 3.A.1.210) subfamily. As to quaternary structure, homodimer.

It localises to the mitochondrion inner membrane. In terms of biological role, performs an essential function in the generation of cytoplasmic iron-sulfur proteins by mediating the ATP-dependent export of Fe/S cluster precursors synthesized by nfs1 and other mitochondrial proteins. Hydrolyzes ATP. Binds glutathione and may function by transporting a glutathione-conjugated iron-sulfur compound. This is Iron-sulfur clusters transporter atm1, mitochondrial from Aspergillus fumigatus (strain ATCC MYA-4609 / CBS 101355 / FGSC A1100 / Af293) (Neosartorya fumigata).